The following is a 36-amino-acid chain: Photosystem I reaction center subunit VIII (36 aa).

Residues 9–29 form a helical membrane-spanning segment; the sequence is ILVPLVGLVFPAIAMASLFLY.

It belongs to the PsaI family.

Its subcellular location is the plastid. The protein resides in the chloroplast thylakoid membrane. In terms of biological role, may help in the organization of the PsaL subunit. This Oltmannsiellopsis viridis (Marine flagellate) protein is Photosystem I reaction center subunit VIII.